Consider the following 502-residue polypeptide: Lysine--tRNA ligase (502 aa).

2 residues coordinate Mg(2+): glutamate 398 and glutamate 405.

Belongs to the class-II aminoacyl-tRNA synthetase family. As to quaternary structure, homodimer. Mg(2+) is required as a cofactor.

It localises to the cytoplasm. The enzyme catalyses tRNA(Lys) + L-lysine + ATP = L-lysyl-tRNA(Lys) + AMP + diphosphate. The sequence is that of Lysine--tRNA ligase (lysS) from Thermotoga maritima (strain ATCC 43589 / DSM 3109 / JCM 10099 / NBRC 100826 / MSB8).